The following is an 816-amino-acid chain: Neuronal PAS domain-containing protein 2 (816 aa).

Residues 1–10 show a composition bias toward basic and acidic residues; sequence MDEDEKDRAK. The disordered stretch occupies residues 1–21; sequence MDEDEKDRAKRASRNKSEKKR. Residues 1 to 61 are sufficient for heterodimer formation with BMAL1, E-box binding and for the effect of NADPH; sequence MDEDEKDRAK…VIGFLQKHNE (61 aa). In terms of domain architecture, bHLH spans 9–59; sequence AKRASRNKSEKKRRDQFNVLIKELSSMLPGNTRKMDKTTVLEKVIGFLQKH. The PAS 1 domain occupies 82–152; the sequence is NEEFTQLMLE…KILSSHMLVT (71 aa). Heme b-binding residues include His119 and His171. Residues 237 to 307 form the PAS 2 domain; sequence FLKEMCVADE…RCHQHLMQFG (71 aa). A PAC domain is found at 311 to 354; it reads SCCYRFLTKGQQWIWLQTHYYITYHQWNSKPEFIVCTHSVVSYA. Disordered stretches follow at residues 364-431, 610-639, 685-705, and 742-816; these read LALE…STPT, ISAQGPKPMRSSQLLPASGRSLSSLPSQFS, QPMMPGSCDARQPSEVSRTGR, and PSFP…LSES. Over residues 400–413 the composition is skewed to low complexity; it reads SGLPSSPSPSASSR. Polar residues predominate over residues 420-431; it reads HTAMSEPTSTPT. Residues 623-639 are compositionally biased toward low complexity; the sequence is LLPASGRSLSSLPSQFS. The span at 745–759 shows a compositional bias: low complexity; it reads PASRPSPLQPAQAQQ. Over residues 780–789 the composition is skewed to polar residues; sequence LLSTFSQQPG. Residues 806–816 show a composition bias toward basic residues; it reads PSRRVSRLSES.

In terms of assembly, component of the circadian clock oscillator which includes the CRY proteins, CLOCK or NPAS2, BMAL1 or BMAL2, CSNK1D and/or CSNK1E, TIMELESS and the PER proteins. Efficient DNA binding requires dimerization with another bHLH protein. Interacts with NCOA3, KAT2B and CREBBP. Forms a heterodimer with BMAL1 and this heterodimerization is required for E-box-dependent transactivation. Interacts with EP300. It depends on heme as a cofactor. Expressed in the retinal ganglion cells (at protein level). Expressed in the hypothalamic suprachiasmatic nuclei (SCN) of the brain. Also found in spinal cord, and to a lesser extent in colon, small intestine and uterus. Exhibits a diurnal variation in its expression in the brain.

The protein localises to the nucleus. Carbon monoxide (CO) and the redox state of the cell can modulate the transcriptional activity of the NPAS2-BMAL1 heterodimer. NADH and NADPH enhance the DNA-binding activity of the heterodimer whereas CO binds the heme group in NPAS2 and inhibits the DNA-binding activity of the heterodimer. Its function is as follows. Transcriptional activator which forms a core component of the circadian clock. The circadian clock, an internal time-keeping system, regulates various physiological processes through the generation of approximately 24 hour circadian rhythms in gene expression, which are translated into rhythms in metabolism and behavior. It is derived from the Latin roots 'circa' (about) and 'diem' (day) and acts as an important regulator of a wide array of physiological functions including metabolism, sleep, body temperature, blood pressure, endocrine, immune, cardiovascular, and renal function. Consists of two major components: the central clock, residing in the suprachiasmatic nucleus (SCN) of the brain, and the peripheral clocks that are present in nearly every tissue and organ system. Both the central and peripheral clocks can be reset by environmental cues, also known as Zeitgebers (German for 'timegivers'). The predominant Zeitgeber for the central clock is light, which is sensed by retina and signals directly to the SCN. The central clock entrains the peripheral clocks through neuronal and hormonal signals, body temperature and feeding-related cues, aligning all clocks with the external light/dark cycle. Circadian rhythms allow an organism to achieve temporal homeostasis with its environment at the molecular level by regulating gene expression to create a peak of protein expression once every 24 hours to control when a particular physiological process is most active with respect to the solar day. Transcription and translation of core clock components (CLOCK, NPAS2, BMAL1, BMAL2, PER1, PER2, PER3, CRY1 and CRY2) plays a critical role in rhythm generation, whereas delays imposed by post-translational modifications (PTMs) are important for determining the period (tau) of the rhythms (tau refers to the period of a rhythm and is the length, in time, of one complete cycle). A diurnal rhythm is synchronized with the day/night cycle, while the ultradian and infradian rhythms have a period shorter and longer than 24 hours, respectively. Disruptions in the circadian rhythms contribute to the pathology of cardiovascular diseases, cancer, metabolic syndromes and aging. A transcription/translation feedback loop (TTFL) forms the core of the molecular circadian clock mechanism. Transcription factors, CLOCK or NPAS2 and BMAL1 or BMAL2, form the positive limb of the feedback loop, act in the form of a heterodimer and activate the transcription of core clock genes and clock-controlled genes (involved in key metabolic processes), harboring E-box elements (5'-CACGTG-3') within their promoters. The core clock genes: PER1/2/3 and CRY1/2 which are transcriptional repressors form the negative limb of the feedback loop and interact with the CLOCK|NPAS2-BMAL1|BMAL2 heterodimer inhibiting its activity and thereby negatively regulating their own expression. This heterodimer also activates nuclear receptors NR1D1/2 and RORA/B/G, which form a second feedback loop and which activate and repress BMAL1 transcription, respectively. The NPAS2-BMAL1 heterodimer positively regulates the expression of MAOA, F7 and LDHA and modulates the circadian rhythm of daytime contrast sensitivity by regulating the rhythmic expression of adenylate cyclase type 1 (ADCY1) in the retina. NPAS2 plays an important role in sleep homeostasis and in maintaining circadian behaviors in normal light/dark and feeding conditions and in the effective synchronization of feeding behavior with scheduled food availability. Regulates the gene transcription of key metabolic pathways in the liver and is involved in DNA damage response by regulating several cell cycle and DNA repair genes. Controls the circadian rhythm of NR0B2 expression by binding rhythmically to its promoter. Mediates the diurnal variation in the expression of GABARA1 receptor in the brain and contributes to the regulation of anxiety-like behaviors and GABAergic neurotransmission in the ventral striatum. The polypeptide is Neuronal PAS domain-containing protein 2 (Npas2) (Mus musculus (Mouse)).